Consider the following 160-residue polypeptide: Lipoprotein signal peptidase (160 aa).

3 helical membrane-spanning segments follow: residues 7-27, 61-81, and 91-111; these read VIYYLLAAAVIALDQWTKWLV, GQFWLFYLVTVIVVAGIIIYI, and AGIGLGLMLGGAIGNFIDRVF. Catalysis depends on residues aspartate 117 and aspartate 135. A helical transmembrane segment spans residues 133–153; the sequence is IADSALTVGVILLFIHMFFFA.

Belongs to the peptidase A8 family.

The protein localises to the cell membrane. The enzyme catalyses Release of signal peptides from bacterial membrane prolipoproteins. Hydrolyzes -Xaa-Yaa-Zaa-|-(S,diacylglyceryl)Cys-, in which Xaa is hydrophobic (preferably Leu), and Yaa (Ala or Ser) and Zaa (Gly or Ala) have small, neutral side chains.. It functions in the pathway protein modification; lipoprotein biosynthesis (signal peptide cleavage). This protein specifically catalyzes the removal of signal peptides from prolipoproteins. In Geobacillus thermodenitrificans (strain NG80-2), this protein is Lipoprotein signal peptidase.